A 356-amino-acid chain; its full sequence is DNA polymerase IV (356 aa).

The UmuC domain occupies 6–187 (IIHIDMDYFF…LDIGDFPGVG (182 aa)). Mg(2+) is bound by residues Asp-10 and Asp-105. Glu-106 is an active-site residue.

It belongs to the DNA polymerase type-Y family. In terms of assembly, monomer. Mg(2+) serves as cofactor.

It is found in the cytoplasm. The enzyme catalyses DNA(n) + a 2'-deoxyribonucleoside 5'-triphosphate = DNA(n+1) + diphosphate. Poorly processive, error-prone DNA polymerase involved in untargeted mutagenesis. Copies undamaged DNA at stalled replication forks, which arise in vivo from mismatched or misaligned primer ends. These misaligned primers can be extended by PolIV. Exhibits no 3'-5' exonuclease (proofreading) activity. May be involved in translesional synthesis, in conjunction with the beta clamp from PolIII. The polypeptide is DNA polymerase IV (Staphylococcus epidermidis (strain ATCC 12228 / FDA PCI 1200)).